A 346-amino-acid polypeptide reads, in one-letter code: Sensor protein kinase GraS (346 aa).

Helical transmembrane passes span 15–35 (MNWI…SLID) and 43–63 (LFYI…LTYF). The 207-residue stretch at 126 to 332 (EFVHDIKTPV…TVRLIFPLQN (207 aa)) folds into the Histidine kinase domain.

As to quaternary structure, interacts with GraX.

Its subcellular location is the cell membrane. The enzyme catalyses ATP + protein L-histidine = ADP + protein N-phospho-L-histidine.. Its function is as follows. Member of the two-component regulatory system GraR/GraS involved in resistance against cationic antimicrobial peptides (CAMPs). Functions as a sensor protein kinase which phosphorylates GraR through the auxiliary protein GraX. In turn, GraR up-regulates many genes such as adhesins, exoproteins, transporters, toxins, and proteins involved in cell wall synthesis. Down-regulates the expression of many genes involved in RNA and amino acid synthesis or glycolysis. This Staphylococcus aureus (strain bovine RF122 / ET3-1) protein is Sensor protein kinase GraS (graS).